A 532-amino-acid polypeptide reads, in one-letter code: Gag-Pol polyprotein (532 aa).

The N-myristoyl glycine; by host moiety is linked to residue G2. Residues 7-31 (VLSGGELDRWEKIRLRPGGKKKYKL) form an interaction with Gp41 region. The interaction with host CALM1 stretch occupies residues 8 to 43 (LSGGELDRWEKIRLRPGGKKKYKLKHIVWASRELER). The tract at residues 12-19 (ELDRWEKI) is interaction with host AP3D1. Positions 14-33 (DRWEKIRLRPGGKKKYKLKH) are interaction with membrane phosphatidylinositol 4,5-bisphosphate and RNA. The short motif at 16 to 22 (WEKIRLR) is the Nuclear export signal element. The Nuclear localization signal signature appears at 26–32 (KKKYKLK). The segment at 73-77 (EELKS) is interaction with membrane phosphatidylinositol 4,5-bisphosphate. Positions 106-127 (EEQNKSKKKAQQAAADTGNSSK) are disordered. A Phosphotyrosine; by host modification is found at Y132. The interaction with human PPIA/CYPA and NUP153 stretch occupies residues 189-227 (NTVGGHQAAMQMLKETINEEAAEWDRLHPAQAGPIAPGQ). Residues 277–363 (YSPSSILDIR…GGPGHKARVL (87 aa)) are dimerization/Multimerization of capsid protein p24. 2 consecutive CCHC-type zinc fingers follow at residues 390-407 (IKCF…NCRA) and 411-428 (KGCW…DCNE). A disordered region spans residues 447-481 (EFSSEQTRANSPSRGELQVWGRDNNPLSEAGAERQ). The segment covering 450 to 459 (SEQTRANSPS) has biased composition (polar residues). The tract at residues 489–493 (PQITL) is dimerization of protease. Residues 508-532 (KEALLDTGADDTVLEEMNSPGRWKP) enclose the Peptidase A2 domain. The For protease activity; shared with dimeric partner role is filled by D513.

Homotrimer; further assembles as hexamers of trimers. Interacts with gp41 (via C-terminus). Interacts with host CALM1; this interaction induces a conformational change in the Matrix protein, triggering exposure of the myristate group. Interacts with host AP3D1; this interaction allows the polyprotein trafficking to multivesicular bodies during virus assembly. Part of the pre-integration complex (PIC) which is composed of viral genome, matrix protein, Vpr and integrase. As to quaternary structure, homodimer; the homodimer further multimerizes as homohexamers or homopentamers. Interacts with human PPIA/CYPA; This interaction stabilizes the capsid. Interacts with human NUP153. Interacts with host PDZD8; this interaction stabilizes the capsid. Interacts with monkey TRIM5; this interaction destabilizes the capsid. In terms of assembly, homodimer, whose active site consists of two apposed aspartic acid residues. Post-translationally, specific enzymatic cleavages by the viral protease yield mature proteins. The protease is released by autocatalytic cleavage. The polyprotein is cleaved during and after budding, this process is termed maturation. Proteolytic cleavage of p66 RT removes the RNase H domain to yield the p51 RT subunit. Nucleocapsid protein p7 might be further cleaved after virus entry. Tyrosine phosphorylated presumably in the virion by a host kinase. Phosphorylation is apparently not a major regulator of membrane association. In terms of processing, phosphorylated possibly by host MAPK1; this phosphorylation is necessary for Pin1-mediated virion uncoating. Post-translationally, methylated by host PRMT6, impairing its function by reducing RNA annealing and the initiation of reverse transcription.

The protein localises to the host cell membrane. Its subcellular location is the host endosome. The protein resides in the host multivesicular body. It is found in the virion membrane. It localises to the host nucleus. The protein localises to the host cytoplasm. Its subcellular location is the virion. The catalysed reaction is Specific for a P1 residue that is hydrophobic, and P1' variable, but often Pro.. With respect to regulation, the viral protease is inhibited by many synthetic protease inhibitors (PIs), such as amprenavir, atazanavir, indinavir, loprinavir, nelfinavir, ritonavir and saquinavir. Use of protease inhibitors in tritherapy regimens permit more ambitious therapeutic strategies. In terms of biological role, mediates, with Gag polyprotein, the essential events in virion assembly, including binding the plasma membrane, making the protein-protein interactions necessary to create spherical particles, recruiting the viral Env proteins, and packaging the genomic RNA via direct interactions with the RNA packaging sequence (Psi). Gag-Pol polyprotein may regulate its own translation, by the binding genomic RNA in the 5'-UTR. At low concentration, the polyprotein would promote translation, whereas at high concentration, the polyprotein would encapsidate genomic RNA and then shut off translation. Its function is as follows. Targets the polyprotein to the plasma membrane via a multipartite membrane-binding signal, that includes its myristoylated N-terminus. Matrix protein is part of the pre-integration complex. Implicated in the release from host cell mediated by Vpu. Binds to RNA. Functionally, forms the conical core that encapsulates the genomic RNA-nucleocapsid complex in the virion. Most core are conical, with only 7% tubular. The core is constituted by capsid protein hexamer subunits. The core is disassembled soon after virion entry. Host restriction factors such as TRIM5-alpha or TRIMCyp bind retroviral capsids and cause premature capsid disassembly, leading to blocks in reverse transcription. Capsid restriction by TRIM5 is one of the factors which restricts HIV-1 to the human species. Host PIN1 apparently facilitates the virion uncoating. On the other hand, interactions with PDZD8 or CYPA stabilize the capsid. Encapsulates and protects viral dimeric unspliced genomic RNA (gRNA). Binds these RNAs through its zinc fingers. Acts as a nucleic acid chaperone which is involved in rearangement of nucleic acid secondary structure during gRNA retrotranscription. Also facilitates template switch leading to recombination. As part of the polyprotein, participates in gRNA dimerization, packaging, tRNA incorporation and virion assembly. In terms of biological role, aspartyl protease that mediates proteolytic cleavages of Gag and Gag-Pol polyproteins during or shortly after the release of the virion from the plasma membrane. Cleavages take place as an ordered, step-wise cascade to yield mature proteins. This process is called maturation. Displays maximal activity during the budding process just prior to particle release from the cell. Also cleaves Nef and Vif, probably concomitantly with viral structural proteins on maturation of virus particles. Hydrolyzes host EIF4GI and PABP1 in order to shut off the capped cellular mRNA translation. The resulting inhibition of cellular protein synthesis serves to ensure maximal viral gene expression and to evade host immune response. Also mediates cleavage of host YTHDF3. Mediates cleavage of host CARD8, thereby activating the CARD8 inflammasome, leading to the clearance of latent HIV-1 in patient CD4(+) T-cells after viral reactivation; in contrast, HIV-1 can evade CARD8-sensing when its protease remains inactive in infected cells prior to viral budding. This is Gag-Pol polyprotein (gag-pol) from Homo sapiens (Human).